Here is a 129-residue protein sequence, read N- to C-terminus: Glycoprotein hormone alpha-2 (129 aa).

Residues 1 to 23 (MPMASPQTLVLYLLVLAVTEAWG) form the signal peptide. Disulfide bonds link Cys-31–Cys-89, Cys-48–Cys-103, Cys-57–Cys-119, and Cys-61–Cys-121. N-linked (GlcNAc...) asparagine glycosylation is found at Asn-37 and Asn-81.

It belongs to the glycoprotein hormones subunit alpha family. Heterodimer with GPHB5; this heterodimer interacts with thyroid-stimulating hormone receptor (TSHR), and hence stimulates cAMP production. Glycosylated. As to expression, found in a variety of tissues.

It is found in the secreted. In terms of biological role, functions as a heterodimeric glycoprotein hormone with GPHB5 able to bind and activate the thyroid-stimulating hormone receptor (TSHR), leading to increased cAMP production. Plays a central role in controlling thyroid cell metabolism. This is Glycoprotein hormone alpha-2 (GPHA2) from Homo sapiens (Human).